The sequence spans 37 residues: MKVRASVKKICDNCRLIRRRKRIMVVCSNPKHKQRQG.

It belongs to the bacterial ribosomal protein bL36 family.

It localises to the plastid. Its subcellular location is the chloroplast. The protein is Large ribosomal subunit protein bL36c of Physcomitrium patens (Spreading-leaved earth moss).